The following is a 303-amino-acid chain: N-acetyl-D-glucosamine kinase (303 aa).

ATP contacts are provided by residues 4–11 and 133–140; these read GFDIGGTK and GVGGGLIF. Zn(2+) contacts are provided by His-157, Cys-177, Cys-179, and Cys-184.

The protein belongs to the ROK (NagC/XylR) family. NagK subfamily.

It catalyses the reaction N-acetyl-D-glucosamine + ATP = N-acetyl-D-glucosamine 6-phosphate + ADP + H(+). It functions in the pathway cell wall biogenesis; peptidoglycan recycling. Catalyzes the phosphorylation of N-acetyl-D-glucosamine (GlcNAc) derived from cell-wall degradation, yielding GlcNAc-6-P. The sequence is that of N-acetyl-D-glucosamine kinase from Escherichia coli O127:H6 (strain E2348/69 / EPEC).